We begin with the raw amino-acid sequence, 180 residues long: Cytidylate kinase 2 (180 aa).

Position 7-15 (7-15 (GKSGCGNTT)) interacts with ATP.

It belongs to the cytidylate kinase family. Type 2 subfamily.

It localises to the cytoplasm. The catalysed reaction is CMP + ATP = CDP + ADP. It carries out the reaction dCMP + ATP = dCDP + ADP. The polypeptide is Cytidylate kinase 2 (cmk2) (Borreliella burgdorferi (strain ATCC 35210 / DSM 4680 / CIP 102532 / B31) (Borrelia burgdorferi)).